The chain runs to 342 residues: Holliday junction branch migration complex subunit RuvB (342 aa).

The tract at residues 1 to 184 (MEEDFNIRDH…FGINLHLEYY (184 aa)) is large ATPase domain (RuvB-L). Residues Leu23, Arg24, Gly65, Lys68, Thr69, Thr70, 131-133 (EDY), Arg174, Tyr184, and Arg221 each bind ATP. Residue Thr69 participates in Mg(2+) binding. Positions 185–255 (DDDILSNIIS…IANYALEALN (71 aa)) are small ATPAse domain (RuvB-S). The segment at 258-342 (KYGLDEIDNK…YNSQKTLFND (85 aa)) is head domain (RuvB-H). Residues Arg313 and Arg318 each coordinate DNA.

Belongs to the RuvB family. In terms of assembly, homohexamer. Forms an RuvA(8)-RuvB(12)-Holliday junction (HJ) complex. HJ DNA is sandwiched between 2 RuvA tetramers; dsDNA enters through RuvA and exits via RuvB. An RuvB hexamer assembles on each DNA strand where it exits the tetramer. Each RuvB hexamer is contacted by two RuvA subunits (via domain III) on 2 adjacent RuvB subunits; this complex drives branch migration. In the full resolvosome a probable DNA-RuvA(4)-RuvB(12)-RuvC(2) complex forms which resolves the HJ.

It is found in the cytoplasm. The enzyme catalyses ATP + H2O = ADP + phosphate + H(+). In terms of biological role, the RuvA-RuvB-RuvC complex processes Holliday junction (HJ) DNA during genetic recombination and DNA repair, while the RuvA-RuvB complex plays an important role in the rescue of blocked DNA replication forks via replication fork reversal (RFR). RuvA specifically binds to HJ cruciform DNA, conferring on it an open structure. The RuvB hexamer acts as an ATP-dependent pump, pulling dsDNA into and through the RuvAB complex. RuvB forms 2 homohexamers on either side of HJ DNA bound by 1 or 2 RuvA tetramers; 4 subunits per hexamer contact DNA at a time. Coordinated motions by a converter formed by DNA-disengaged RuvB subunits stimulates ATP hydrolysis and nucleotide exchange. Immobilization of the converter enables RuvB to convert the ATP-contained energy into a lever motion, pulling 2 nucleotides of DNA out of the RuvA tetramer per ATP hydrolyzed, thus driving DNA branch migration. The RuvB motors rotate together with the DNA substrate, which together with the progressing nucleotide cycle form the mechanistic basis for DNA recombination by continuous HJ branch migration. Branch migration allows RuvC to scan DNA until it finds its consensus sequence, where it cleaves and resolves cruciform DNA. The sequence is that of Holliday junction branch migration complex subunit RuvB from Bacteroides fragilis (strain ATCC 25285 / DSM 2151 / CCUG 4856 / JCM 11019 / LMG 10263 / NCTC 9343 / Onslow / VPI 2553 / EN-2).